The chain runs to 290 residues: Membrane-spanning 4-domains subfamily A member 8 (290 aa).

Residues 1 to 21 (MNRPTAQGAVNLSGSKFSTAK) show a composition bias toward polar residues. The segment at 1–25 (MNRPTAQGAVNLSGSKFSTAKSWEP) is disordered. Topologically, residues 1 to 108 (MNRPTAQGAV…PAQRVLKKGQ (108 aa)) are cytoplasmic. Residues 109 to 129 (VLGAIQILIGLVHIGLGSIMI) form a helical membrane-spanning segment. The Extracellular segment spans residues 130-138 (TNLFSHYTP). The helical transmembrane segment at 139 to 159 (VSLYGGFPFWGGIWFIISGSL) threads the bilayer. Residues 160–174 (SVAAETQPNSPCLLN) are Cytoplasmic-facing. The chain crosses the membrane as a helical span at residues 175-195 (GSVGLNIFSAICSAVGIMLFI). Topologically, residues 196–220 (TDISISSGYIYPSYYPYQENLGVRT) are extracellular. A helical membrane pass occupies residues 221 to 241 (GVAISSVLLIFCLLELSIASV). Topologically, residues 242-290 (SSHFGCQVACCHYNNPGVVIPNVYAANPVVIPEPPNPIPSYSEVVQDSR) are cytoplasmic.

Belongs to the MS4A family. Expressed strongly in intestine and colon and minimally in lung and ovary.

It localises to the membrane. May be involved in signal transduction as a component of a multimeric receptor complex. In Mus musculus (Mouse), this protein is Membrane-spanning 4-domains subfamily A member 8 (Ms4a8).